A 194-amino-acid polypeptide reads, in one-letter code: Inosine triphosphate pyrophosphatase (194 aa).

An ITP-binding site is contributed by 10–15 (TSSKKK). Position 37 (Glu-37) interacts with Mg(2+). ITP contacts are provided by residues Lys-49, 65–66 (DV), Lys-82, 142–145 (FGWD), Lys-166, and 171–172 (HR).

Belongs to the HAM1 NTPase family. Homodimer. Mg(2+) serves as cofactor. It depends on Mn(2+) as a cofactor.

It localises to the cytoplasm. It carries out the reaction ITP + H2O = IMP + diphosphate + H(+). It catalyses the reaction dITP + H2O = dIMP + diphosphate + H(+). The catalysed reaction is XTP + H2O = XMP + diphosphate + H(+). Functionally, pyrophosphatase that hydrolyzes non-canonical purine nucleotides such as inosine triphosphate (ITP), deoxyinosine triphosphate (dITP) or xanthosine 5'-triphosphate (XTP) to their respective monophosphate derivatives. The enzyme does not distinguish between the deoxy- and ribose forms. Probably excludes non-canonical purines from RNA and DNA precursor pools, thus preventing their incorporation into RNA and DNA and avoiding chromosomal lesions. The chain is Inosine triphosphate pyrophosphatase from Giardia intestinalis (strain ATCC 50803 / WB clone C6) (Giardia lamblia).